The sequence spans 513 residues: MDMLNLTLKPGCLSLNQLRQVSRSPINLSLDASAIPAIEESTQVVERVIAEDRTVYGINTGFGLLANTRIAPEDLETLQRSIVLSHAAGIGEFMADETVRLMMVLKINSLSRGYSGIRLNVIQMLIDLVNAQVYPCVPQKGSVGASGDLAPLAHMSTVLLGEGQARHNGKIISGLEALKIAGLEPITLAPKEGLALLNGTQASTAFALEGLFIAEDLFASATVCGAMSVEAALGSRRPFDPRIHRVRGHRSQMDSAMAYRHLLDTSSEIGQSHSNCEKVQDPYSLRCQPQVMGACLQQIRNSAEILLVESNSVSDNPLVFAEDDDIISGGNFHAEPVAMAADNLALAIAEIGSLSERRMALLIDSALSKLPPFLVDNGGVNSGFMIAQVTSAALASENKTLAHPASVDSLPTSANQEDHVSMATFAARRLREMGENTRGILAVEYLSAAQGLDFRAPHKSSPRIEQAKQMLREKVSFYDKDRYFAPDIEKANSLLKLAMHNVLMPEALLPSVL.

Positions 145–147 (ASG) form a cross-link, 5-imidazolinone (Ala-Gly). At Ser-146 the chain carries 2,3-didehydroalanine (Ser).

This sequence belongs to the PAL/histidase family. Post-translationally, contains an active site 4-methylidene-imidazol-5-one (MIO), which is formed autocatalytically by cyclization and dehydration of residues Ala-Ser-Gly.

Its subcellular location is the cytoplasm. It catalyses the reaction L-histidine = trans-urocanate + NH4(+). It participates in amino-acid degradation; L-histidine degradation into L-glutamate; N-formimidoyl-L-glutamate from L-histidine: step 1/3. In Vibrio vulnificus (strain CMCP6), this protein is Histidine ammonia-lyase.